The chain runs to 461 residues: Photosystem II CP43 reaction center protein (461 aa).

The propeptide occupies 1–2 (ME). An N-acetylthreonine modification is found at T3. T3 carries the post-translational modification Phosphothreonine. The next 5 helical transmembrane spans lie at 57 to 81 (LFEVAHFVPEKPMYEQGLILLPHLA), 122 to 143 (LLGPETLEESFPFFGYVWKDRN), 166 to 188 (KASYFGGIYDTWAPGGGDVRKIT), 243 to 263 (KPFAWARRALVWSGEAYLSYS), and 279 to 300 (WFNNTAYPSEFYGPTGPEASQA). E355 lines the [CaMn4O5] cluster pocket. A helical transmembrane segment spans residues 435–459 (RARAAAAGFEKGIDRDFEPVLSMTP).

Belongs to the PsbB/PsbC family. PsbC subfamily. As to quaternary structure, PSII is composed of 1 copy each of membrane proteins PsbA, PsbB, PsbC, PsbD, PsbE, PsbF, PsbH, PsbI, PsbJ, PsbK, PsbL, PsbM, PsbT, PsbX, PsbY, PsbZ, Psb30/Ycf12, at least 3 peripheral proteins of the oxygen-evolving complex and a large number of cofactors. It forms dimeric complexes. It depends on Binds multiple chlorophylls and provides some of the ligands for the Ca-4Mn-5O cluster of the oxygen-evolving complex. It may also provide a ligand for a Cl- that is required for oxygen evolution. PSII binds additional chlorophylls, carotenoids and specific lipids. as a cofactor.

The protein localises to the plastid. The protein resides in the chloroplast thylakoid membrane. Functionally, one of the components of the core complex of photosystem II (PSII). It binds chlorophyll and helps catalyze the primary light-induced photochemical processes of PSII. PSII is a light-driven water:plastoquinone oxidoreductase, using light energy to abstract electrons from H(2)O, generating O(2) and a proton gradient subsequently used for ATP formation. This Lotus japonicus (Lotus corniculatus var. japonicus) protein is Photosystem II CP43 reaction center protein.